The sequence spans 739 residues: MENETHYAEAVIDNGAFGTRTIRFETGRLARQAAGSAVAYLDDDTMVLSATSASKNPKDQLDFFPLTVDVEERMYAAGKIPGSFFRREGRPSEDAILTCRLIDRPLRPSFKKGLRNEIQVVATIMALNPDHLYDVVAINAASASTQLAGLPFSGPIGGVRVALIRGQWVAFPTHTELEDAVFDMVVAGRVLEDGDVAIMMVEAEATDKTIKLVEGGAEAPTEEVVAAGLDAAKPFIKVLCRAQADLAAKAAKPTGEFPIFLDFQDDVLEALTGAVKPELTQALTIAGKQEREAELDRVKGLAAEKLLPEFEGREKEISAAYRALTKSLVRERVIKEKKRIDGRGVTDIRTLAAEVEAIPRVHGSALFERGETQILGVTTLNMLRMEQQLDTLSPVTRKRYMHNYNFPPYSVGETGRVGSPKRREIGHGALAERAIVPVLPTREEFPYAIRQVSEALGSNGSTSMGSVCASTMSLLNAGVPLKAPVAGIAMGLISQEINGETHYVALTDILGAEDAFGDMDFKVAGTKEFVTALQLDTKLDGIPASVLAAALKQARDARLHILDVMMEAIDTPDEMSPNAPRIITVKIPVDKIGEVIGPKGKMINQIQEDTGADITIEDDGTIYIGAAQGSQAEAARATINGIANPTMPEVGERYLGTVVKTTTFGAFVSLLPGKDGLLHISQIRKLAGGKRVENVEDVLGVGAKVQVEIAEIDSRGKLSLIPVIEGEAGDDDKKDDADK.

Residues Asp514 and Asp520 each contribute to the Mg(2+) site. Positions 580-639 (PRIITVKIPVDKIGEVIGPKGKMINQIQEDTGADITIEDDGTIYIGAAQGSQAEAARATI) constitute a KH domain. One can recognise an S1 motif domain in the interval 651–723 (GERYLGTVVK…SRGKLSLIPV (73 aa)).

This sequence belongs to the polyribonucleotide nucleotidyltransferase family. It depends on Mg(2+) as a cofactor.

The protein localises to the cytoplasm. It carries out the reaction RNA(n+1) + phosphate = RNA(n) + a ribonucleoside 5'-diphosphate. Involved in mRNA degradation. Catalyzes the phosphorolysis of single-stranded polyribonucleotides processively in the 3'- to 5'-direction. This Streptomyces coelicolor (strain ATCC BAA-471 / A3(2) / M145) protein is Polyribonucleotide nucleotidyltransferase.